The sequence spans 334 residues: Serpentine receptor class alpha-11 (334 aa).

At 1-23 the chain is on the extracellular side; it reads MTTNNPVCASDAHMEMYSSKLYT. A helical transmembrane segment spans residues 24 to 44; sequence SALFLNLIIATTSMILTGFAI. At 45 to 57 the chain is on the cytoplasmic side; sequence QKLFMESIINIST. The helical transmembrane segment at 58–80 threads the bilayer; that stretch reads RMFLFCGLMCCSLHQTAYIVLRI. Residues 81–105 are Extracellular-facing; it reads QVIYQVFFKLSEPCNLYYPAIDCKY. The helical transmembrane segment at 106–126 threads the bilayer; that stretch reads VTFSLVAGNTGMIFIQSAMTI. Residues 127 to 145 are Cytoplasmic-facing; it reads DRIFATIFPKLWPKLKYWP. Residues 146–166 traverse the membrane as a helical segment; the sequence is GVVLSILMIACNYANVQIIFW. At 167-191 the chain is on the extracellular side; the sequence is GDPLTEYVPTCGQFPSKSVNRFQTF. Residues 192-212 form a helical membrane-spanning segment; that stretch reads LAIALYMSIAHMVINVIILYI. Topologically, residues 213 to 239 are cytoplasmic; the sequence is NVLQDRQQSKSFNVNQRYQSREALKSS. The helical transmembrane segment at 240–260 threads the bilayer; it reads QAIFFLSMSQFFACLIYSVFT. Topologically, residues 261 to 277 are extracellular; that stretch reads KVFLEFQLNLSPLQSGL. The helical transmembrane segment at 278-298 threads the bilayer; it reads VLALSYTTPYACIAIPSLIIF. Topologically, residues 299 to 334 are cytoplasmic; that stretch reads TFRFIKNQRLRNINELRSQTETGDECMRKIAKIWEK.

The protein belongs to the nematode receptor-like protein sra family. As to expression, expressed in interneurons AIY and AVB in L1 larvae. In adults, strong expression is seen in AIY and AIA but only weak expression in AVB.

It localises to the membrane. A G protein-coupled receptor required for olfactory imprinting a requisite in ordorant response such as benzaldehyde and isoamylalcohol. This is Serpentine receptor class alpha-11 (sra-11) from Caenorhabditis elegans.